Reading from the N-terminus, the 93-residue chain is UPF0728 protein C10orf53 (93 aa).

The protein belongs to the UPF0728 family.

The sequence is that of UPF0728 protein C10orf53 (C10orf53) from Homo sapiens (Human).